Here is a 288-residue protein sequence, read N- to C-terminus: UDP-3-O-acyl-N-acetylglucosamine deacetylase (288 aa).

Zn(2+)-binding residues include H79, H236, and D240. H263 acts as the Proton donor in catalysis.

This sequence belongs to the LpxC family. Zn(2+) is required as a cofactor.

It catalyses the reaction a UDP-3-O-[(3R)-3-hydroxyacyl]-N-acetyl-alpha-D-glucosamine + H2O = a UDP-3-O-[(3R)-3-hydroxyacyl]-alpha-D-glucosamine + acetate. Its pathway is glycolipid biosynthesis; lipid IV(A) biosynthesis; lipid IV(A) from (3R)-3-hydroxytetradecanoyl-[acyl-carrier-protein] and UDP-N-acetyl-alpha-D-glucosamine: step 2/6. Functionally, catalyzes the hydrolysis of UDP-3-O-myristoyl-N-acetylglucosamine to form UDP-3-O-myristoylglucosamine and acetate, the committed step in lipid A biosynthesis. The sequence is that of UDP-3-O-acyl-N-acetylglucosamine deacetylase from Rickettsia bellii (strain OSU 85-389).